Here is a 159-residue protein sequence, read N- to C-terminus: Urease accessory protein UreE (159 aa).

Belongs to the UreE family.

It is found in the cytoplasm. Functionally, involved in urease metallocenter assembly. Binds nickel. Probably functions as a nickel donor during metallocenter assembly. The protein is Urease accessory protein UreE of Pseudomonas entomophila (strain L48).